The chain runs to 268 residues: MIALDHLRHVNVEAARTARARYRAGTVEPTSGIAPGFTQANMIVLPRDWAFDFLLYAQRNPRACPVLDVSDPGSHTTLLAPGADLRKDLPLYRVWRDGKLAEETTDATAAWGEHPDLVSFLIGCSFTFETPMVEAGIEIRHITDRSNVPMYLTNKACRPAGRLRGNMVVSMRPIPASRVADAATISGRFPAVHGAPVHVGAPEEIGIKDLAKPEFGDPVRIEPGEIPVFWACGVTPQAAVMASGVPFAITHAPGHMFITNIPDSAYHA.

This sequence belongs to the D-glutamate cyclase family.

In Rhizobium rhizogenes (strain K84 / ATCC BAA-868) (Agrobacterium radiobacter), this protein is Putative hydro-lyase Arad_8587.